Consider the following 372-residue polypeptide: Spermidine/putrescine import ATP-binding protein PotA (372 aa).

Residues 13 to 243 (IKLTGISKSF…PKNLFVARFI (231 aa)) enclose the ABC transporter domain. An ATP-binding site is contributed by 45 to 52 (GPSGCGKT).

The protein belongs to the ABC transporter superfamily. Spermidine/putrescine importer (TC 3.A.1.11.1) family. The complex is composed of two ATP-binding proteins (PotA), two transmembrane proteins (PotB and PotC) and a solute-binding protein (PotD).

It localises to the cell inner membrane. It carries out the reaction ATP + H2O + polyamine-[polyamine-binding protein]Side 1 = ADP + phosphate + polyamineSide 2 + [polyamine-binding protein]Side 1.. Functionally, part of the ABC transporter complex PotABCD involved in spermidine/putrescine import. Responsible for energy coupling to the transport system. The protein is Spermidine/putrescine import ATP-binding protein PotA of Aliivibrio fischeri (strain ATCC 700601 / ES114) (Vibrio fischeri).